Here is a 212-residue protein sequence, read N- to C-terminus: Nucleoside triphosphate pyrophosphatase (212 aa).

The Proton acceptor role is filled by Asp-79.

It belongs to the Maf family. Requires a divalent metal cation as cofactor.

It localises to the cytoplasm. The enzyme catalyses a ribonucleoside 5'-triphosphate + H2O = a ribonucleoside 5'-phosphate + diphosphate + H(+). The catalysed reaction is a 2'-deoxyribonucleoside 5'-triphosphate + H2O = a 2'-deoxyribonucleoside 5'-phosphate + diphosphate + H(+). In terms of biological role, nucleoside triphosphate pyrophosphatase. May have a dual role in cell division arrest and in preventing the incorporation of modified nucleotides into cellular nucleic acids. The protein is Nucleoside triphosphate pyrophosphatase of Nocardia farcinica (strain IFM 10152).